Here is a 406-residue protein sequence, read N- to C-terminus: Cysteine desulfurase (406 aa).

K226 carries the N6-(pyridoxal phosphate)lysine modification. Catalysis depends on C364, which acts as the Cysteine persulfide intermediate.

This sequence belongs to the class-V pyridoxal-phosphate-dependent aminotransferase family. Csd subfamily. As to quaternary structure, homodimer. Interacts with SufE and the SufBCD complex composed of SufB, SufC and SufD. The interaction with SufE is required to mediate the direct transfer of the sulfur atom from the S-sulfanylcysteine. The cofactor is pyridoxal 5'-phosphate.

Its subcellular location is the cytoplasm. It catalyses the reaction (sulfur carrier)-H + L-cysteine = (sulfur carrier)-SH + L-alanine. It carries out the reaction L-selenocysteine + AH2 = hydrogenselenide + L-alanine + A + H(+). The protein operates within cofactor biosynthesis; iron-sulfur cluster biosynthesis. Its function is as follows. Cysteine desulfurases mobilize the sulfur from L-cysteine to yield L-alanine, an essential step in sulfur metabolism for biosynthesis of a variety of sulfur-containing biomolecules. Component of the suf operon, which is activated and required under specific conditions such as oxidative stress and iron limitation. Acts as a potent selenocysteine lyase in vitro, that mobilizes selenium from L-selenocysteine. Selenocysteine lyase activity is however unsure in vivo. The polypeptide is Cysteine desulfurase (Escherichia coli O8 (strain IAI1)).